Reading from the N-terminus, the 329-residue chain is Adenylate isopentenyltransferase 7, mitochondrial (329 aa).

A mitochondrion-targeting transit peptide spans 1 to 40; it reads MKFSISSLKQVQPILCFKNKLSKVNVNSFLHPKEKVIFVM. 41-48 is a binding site for ATP; the sequence is GATGSGKS.

The protein belongs to the IPP transferase family. As to expression, expressed in both the vascular stele and the phloem companion cells of the root, in endodermis of the root elongation zone, trichomes on young leaves, and some pollen tubes.

It localises to the mitochondrion. It catalyses the reaction dimethylallyl diphosphate + ADP = N(6)-(dimethylallyl)adenosine 5'-diphosphate + diphosphate. The enzyme catalyses dimethylallyl diphosphate + ATP = N(6)-(dimethylallyl)adenosine 5'-triphosphate + diphosphate. Functionally, involved in cytokinin biosynthesis. Catalyzes the transfer of an isopentenyl group from dimethylallyl diphosphate (DMAPP) to ATP and ADP. The protein is Adenylate isopentenyltransferase 7, mitochondrial (IPT7) of Arabidopsis thaliana (Mouse-ear cress).